Consider the following 191-residue polypeptide: Clusterin (191 aa).

N-linked (GlcNAc...) asparagine glycans are attached at residues Asn-79, Asn-116, Asn-142, and Asn-162. At Ser-184 the chain carries Phosphoserine.

This sequence belongs to the clusterin family. In terms of assembly, antiparallel disulfide-linked heterodimer of an alpha chain and a beta chain. Self-associates and forms higher oligomers. Interacts with a broad range of misfolded proteins, including APP, APOC2 and LYZ. Slightly acidic pH promotes interaction with misfolded proteins. Forms high-molecular weight oligomers upon interaction with misfolded proteins. Interacts with APOA1, LRP2, CLUAP1 and PON1. Interacts with the complement membrane attack complex. Interacts (via alpha chain) with XRCC6. Interacts with SYVN1, COMMD1, BTRC, CUL1 and with ubiquitin and SCF (SKP1-CUL1-F-box protein) E3 ubiquitin-protein ligase complexes. Interacts (via alpha chain) with BAX in stressed cells, where BAX undergoes a conformation change leading to association with the mitochondrial membrane. Does not interact with BAX in unstressed cells. Found in a complex with LTF, CLU, EPPIN and SEMG1. Interacts (immaturely glycosylated pre-secreted form) with HSPA5; this interaction promotes CLU stability and facilitates stress-induced CLU retrotranslocation from the secretory pathway to the mitochondria, thereby reducing stress-induced apoptosis by stabilizing mitochondrial membrane integrity. Interacts with BCL2L1; this interaction releases and activates BAX and promotes cell death. Interacts with TGFBR2 and ACVR1. Interacts (secreted form) with STMN3; this interaction may act as an important modulator during neuronal differentiation. In terms of processing, proteolytically cleaved on its way through the secretory system, probably within the Golgi lumen. Proteolytic cleavage is not necessary for its chaperone activity. All non-secreted forms are not proteolytically cleaved. Chaperone activity of uncleaved forms is dependent on a non-reducing environment. Polyubiquitinated, leading to proteasomal degradation. Under cellular stress, the intracellular level of cleaved form is reduced due to proteasomal degradation. Post-translationally, heavily N-glycosylated. About 30% of the protein mass is comprised of complex N-linked carbohydrate. Endoplasmic reticulum (ER) stress induces changes in glycosylation status and increases level of hypoglycosylated forms. Core carbohydrates are essential for chaperone activity. Non-secreted forms are hypoglycosylated or unglycosylated.

The protein resides in the secreted. It is found in the nucleus. The protein localises to the cytoplasm. Its subcellular location is the mitochondrion membrane. It localises to the cytosol. The protein resides in the microsome. It is found in the endoplasmic reticulum. The protein localises to the mitochondrion. Its subcellular location is the perinuclear region. It localises to the cytoplasmic vesicle. The protein resides in the secretory vesicle. It is found in the chromaffin granule. Functions as extracellular chaperone that prevents aggregation of non native proteins. Prevents stress-induced aggregation of blood plasma proteins. Inhibits formation of amyloid fibrils by APP, APOC2, B2M, CALCA, CSN3, SNCA and aggregation-prone LYZ variants (in vitro). Does not require ATP. Maintains partially unfolded proteins in a state appropriate for subsequent refolding by other chaperones, such as HSPA8/HSC70. Does not refold proteins by itself. Binding to cell surface receptors triggers internalization of the chaperone-client complex and subsequent lysosomal or proteasomal degradation. When secreted, protects cells against apoptosis and against cytolysis by complement: inhibits assembly of the complement membrane attack complex (MAC) by preventing polymerization of C9 pore component of the MAC complex. Intracellular forms interact with ubiquitin and SCF (SKP1-CUL1-F-box protein) E3 ubiquitin-protein ligase complexes and promote the ubiquitination and subsequent proteasomal degradation of target proteins. Promotes proteasomal degradation of COMMD1 and IKBKB. Modulates NF-kappa-B transcriptional activity. Following stress, promotes apoptosis. Inhibits apoptosis when associated with the mitochondrial membrane by interference with BAX-dependent release of cytochrome c into the cytoplasm. Plays a role in the regulation of cell proliferation. An intracellular form suppresses stress-induced apoptosis by stabilizing mitochondrial membrane integrity through interaction with HSPA5. Secreted form does not affect caspase or BAX-mediated intrinsic apoptosis and TNF-induced NF-kappa-B-activity. Secreted form act as an important modulator during neuronal differentiation through interaction with STMN3. Plays a role in the clearance of immune complexes that arise during cell injury. The sequence is that of Clusterin from Mesocricetus auratus (Golden hamster).